The following is an 82-amino-acid chain: ATP synthase subunit c, chloroplastic (82 aa).

2 consecutive transmembrane segments (helical) span residues 7–27 (AASV…PGIG) and 57–77 (LAFM…LLFA).

Belongs to the ATPase C chain family. In terms of assembly, F-type ATPases have 2 components, F(1) - the catalytic core - and F(0) - the membrane proton channel. F(1) has five subunits: alpha(3), beta(3), gamma(1), delta(1), epsilon(1). F(0) has four main subunits: a(1), b(1), b'(1) and c(10-14). The alpha and beta chains form an alternating ring which encloses part of the gamma chain. F(1) is attached to F(0) by a central stalk formed by the gamma and epsilon chains, while a peripheral stalk is formed by the delta, b and b' chains.

It is found in the plastid. It localises to the chloroplast thylakoid membrane. F(1)F(0) ATP synthase produces ATP from ADP in the presence of a proton or sodium gradient. F-type ATPases consist of two structural domains, F(1) containing the extramembraneous catalytic core and F(0) containing the membrane proton channel, linked together by a central stalk and a peripheral stalk. During catalysis, ATP synthesis in the catalytic domain of F(1) is coupled via a rotary mechanism of the central stalk subunits to proton translocation. Its function is as follows. Key component of the F(0) channel; it plays a direct role in translocation across the membrane. A homomeric c-ring of between 10-14 subunits forms the central stalk rotor element with the F(1) delta and epsilon subunits. This Rhodomonas salina (Cryptomonas salina) protein is ATP synthase subunit c, chloroplastic.